A 93-amino-acid chain; its full sequence is MATAVRAHVWVGGKVQGVYFRAATREAAQRQGVAGWVRNLPDGRVEAVFEGPPAAVQRLIDWCRQGPPAAVVEQLRVAYELPEGLTHFEVLRS.

The Acylphosphatase-like domain occupies 6–92 (RAHVWVGGKV…EGLTHFEVLR (87 aa)). Active-site residues include arginine 21 and asparagine 39.

The protein belongs to the acylphosphatase family.

It carries out the reaction an acyl phosphate + H2O = a carboxylate + phosphate + H(+). The sequence is that of Acylphosphatase (acyP) from Gloeobacter violaceus (strain ATCC 29082 / PCC 7421).